The following is a 395-amino-acid chain: MLRSWEFVLLISCFLCFSSDALQRISLKKMPSIRETLQEMGMKVADVLPSLKHRISYLDEGLHNKTASTILTNFRDTQYYGEISIGTPAQIFKVVFDTGSSNLWVPSRQCSPLYSACVSHNRYDSSESSTYKPKGTKITLTYAQGYIKGFFSQDIVRVADIPIIQFFTEAIALPSIPFIFARFDGVLGMGYPKQAIGGVIPVFDNIMSEKVLSENVFSVYYSRHSESNTGGEIILGGSDPSHYTGDFHYVSTSREGYWHVDLKGVSIENKIVLCHDGCTATIDTGTSFISGPASSISVLMETIGATLSDGDYVIDCKKINLLPDITFHLGDMTYSLSSSTYVLKFSDETECTVAFMAVDIPPPLGPLWLLGATFIKQYYIEFDRQNNRIGFATSF.

The N-terminal stretch at 1–21 (MLRSWEFVLLISCFLCFSSDA) is a signal peptide. A propeptide spans 22-43 (LQRISLKKMPSIRETLQEMGMK) (activation peptide). N-linked (GlcNAc...) asparagine glycosylation occurs at asparagine 64. In terms of domain architecture, Peptidase A1 spans 79-392 (YYGEISIGTP…DRQNNRIGFA (314 aa)). Aspartate 97 is an active-site residue. 2 disulfides stabilise this stretch: cysteine 110/cysteine 117 and cysteine 274/cysteine 278. The active site involves aspartate 283. Cysteines 316 and 351 form a disulfide.

Belongs to the peptidase A1 family. Post-translationally, N-glycosylated. As to expression, expressed by the venom gland (at protein level).

It localises to the secreted. The catalysed reaction is Cleavage of Leu-|-Xaa bond in angiotensinogen to generate angiotensin I.. Inhibited completely by aspartyl protease inhibitor pepstatin A, but not by the serine- or metalloproteinase inhibitors PMSF or EDTA. Renin is a highly specific endopeptidase, whose only known function is to generate angiotensin I from angiotensinogen in the plasma, initiating a cascade of reactions that produce an elevation of blood pressure and increased sodium retention by the kidney. This protein is also found in snake venom and shown to specifically cleave human and porcine angiotensinogen into angiotensin I. It does not have general protease activity, no cleavage of alpha or beta casein. May be directly responsible for elevation of blood pressure in the victims of envenomation. The polypeptide is Renin (Echis ocellatus (Ocellated saw-scaled viper)).